A 1576-amino-acid polypeptide reads, in one-letter code: MSTKGRGIFPFSKIKLMLASPDDIRSWSHGEVKRPETLNYRTLKPEKDGLFCAKIFGPTKDYECLCGKYRGKRYEGKICEKCGVEVTSSYVRRERFGHIELAAPVVHIWFLKSTPSKIGTLLNLTSRDVERVAYFESYLVIEYPNEEEEEKFEKEEGTIPLNDGISTKWVKLHVVNEEEFEEKYAFSIDEKYEYGMGAEILKEVLSKIDLEAYSKKLKELVKPYSLGFEDLGREVAEKYKNLYQKLVKVIADDFRAYGVELKGLEDKGLTLEQAIHRIITEELYLNVETGEVEFEDCGDNCLTGREALRVYYEKVREHKRDIPIFEKIKEDVRTAVLREVSEARIRKALRILQLVEGFKKSGNRPEWMILEVLPVIPPELRPLVALDGGRFATSDLNDLYRRVINRNNRLKRLIELSAPDIIIRNEKRMLQEAVDALIDNGKRGNPVKQNGRPLKSLADYLKGKQGRFRQNLLGKRVDYSGRSVIVVGPELQMHQCGLPKIMALELFKPFVYRRLEEKGYATSIKHAKKLVEQKTPEVWECLEEVVKQHPVLLNRAPTLHRPSIQAFEPVLVEGKAIQLHPLVCPPFNADFDGDQMAVHVPLGIEAQLESYILMLSTQNILSPAHGKPLTMPSQDMVLGTYYMTHDPIPGRKGEGKAFTSYEEVIKALELGHVDIHAKIKFKVGKEWIETTPGRVLFNSIMPEGQPFVNETLDKKRLSKLITNLYIAVGNEETVKFLDRVKELGFLRSTLAGISIGIDDLQVPKVKEKIIKEALKKTEEIWNQYVQGIITNKERYNRIIDVWSEATNAVSKAMFEEIEHSTEIRNGKEYPGTFNPIYMMAVSGARGNRDQIRQLAGMRGLMAKHSGEFIETPIISNFREGLSVLEYFISTYGARKGLADTALKTAFAGYLTRRLVDVAQDITITEKDCGTVKGFEMEPIVEAGEERVPLKDRIFGRVLAEDVKDPYTGEVIAKRNEVVDEKLAERIARAGIEKVKVRSPLTCEAKHGVCAMCYGWDLSQRKIVSVGEAVGIIAAQSIGEPGTQLTMRTFHIGGAATAQKVQSFVKTESEGTVKFYNVKFIVNRKGEKINVSKDAAIGVLDEKGRLLERHTIPYGARLLVDEGQKVKAGTKLADWDPFNTYIIAEVGGKIELRDIILDVTVREERDVITGKTATVVSFMRPKDAMLHTPRIAVITEDGKEYVYDLPVNAILNIPADKLTLEWRICPTCSESEETTIQHQYYVVKELEVQPGDILARIPKETAKVRDIVGGLPRVEELFEARKPKNPAILSEIDGYVKIYEDADEVIVFNPRTGETKKYAIKKDELILVRHGQYIKKGQKITETKVAEIDGQVRIKGRGFKVIVYNPETGLQREYFVPKGKFLLVKEGDYVKAGDPLTDGTPVPEEILRIKGIEELEKFLLKEVQMVYKLQGVDINDKHFEIIIRQMLKKVRIIDPGDSRFLVGEEVDKEELEEEIQRIKLEGGKLPKAEPVLVGITRAALSTRSWISAASFQETTRVLTDASVEGKIDELRGLKENVIIGNLIPAGTGVDEYKEVDVIPAEEKVLEEKPQSSEEETS.

Residues Cys64, Cys66, Cys79, and Cys82 each contribute to the Zn(2+) site. 3 residues coordinate Mg(2+): Asp590, Asp592, and Asp594. Residues Cys928, Cys1002, Cys1009, and Cys1012 each coordinate Zn(2+).

The protein belongs to the RNA polymerase beta' chain family. As to quaternary structure, the RNAP catalytic core consists of 2 alpha, 1 beta, 1 beta' and 1 omega subunit. When a sigma factor is associated with the core the holoenzyme is formed, which can initiate transcription. Requires Mg(2+) as cofactor. It depends on Zn(2+) as a cofactor.

The catalysed reaction is RNA(n) + a ribonucleoside 5'-triphosphate = RNA(n+1) + diphosphate. DNA-dependent RNA polymerase catalyzes the transcription of DNA into RNA using the four ribonucleoside triphosphates as substrates. In Aquifex pyrophilus, this protein is DNA-directed RNA polymerase subunit beta'.